The primary structure comprises 110 residues: METIAKHRYARTSAQKARLVADLIRGKKVAQALEILTFTNKKASALVKKVLESAIANAEHNDGADVDDLKVAKIFVDEGPSMKRVMPRAKGRADRILKRTSHITVVVSDR.

This sequence belongs to the universal ribosomal protein uL22 family. In terms of assembly, part of the 50S ribosomal subunit.

In terms of biological role, this protein binds specifically to 23S rRNA; its binding is stimulated by other ribosomal proteins, e.g. L4, L17, and L20. It is important during the early stages of 50S assembly. It makes multiple contacts with different domains of the 23S rRNA in the assembled 50S subunit and ribosome. The globular domain of the protein is located near the polypeptide exit tunnel on the outside of the subunit, while an extended beta-hairpin is found that lines the wall of the exit tunnel in the center of the 70S ribosome. The sequence is that of Large ribosomal subunit protein uL22 from Haemophilus ducreyi (strain 35000HP / ATCC 700724).